Reading from the N-terminus, the 90-residue chain is ESAT-6-like protein EsxE (90 aa).

The protein belongs to the WXG100 family. ESAT-6 subfamily.

Its subcellular location is the secreted. This chain is ESAT-6-like protein EsxE, found in Mycobacterium tuberculosis (strain CDC 1551 / Oshkosh).